The primary structure comprises 339 residues: Heat-inducible transcription repressor HrcA (339 aa).

The protein belongs to the HrcA family.

Its function is as follows. Negative regulator of class I heat shock genes (grpE-dnaK-dnaJ and groELS operons). Prevents heat-shock induction of these operons. The chain is Heat-inducible transcription repressor HrcA from Clostridium perfringens (strain 13 / Type A).